The primary structure comprises 210 residues: Large ribosomal subunit protein uL3 (210 aa).

The interval 133 to 152 is disordered; it reads ATHGNSLSHRVHGSTGQNQT. Position 151 is an N5-methylglutamine (Gln-151).

This sequence belongs to the universal ribosomal protein uL3 family. In terms of assembly, part of the 50S ribosomal subunit. Forms a cluster with proteins L14 and L19. Methylated by PrmB.

Its function is as follows. One of the primary rRNA binding proteins, it binds directly near the 3'-end of the 23S rRNA, where it nucleates assembly of the 50S subunit. The polypeptide is Large ribosomal subunit protein uL3 (Francisella tularensis subsp. holarctica (strain FTNF002-00 / FTA)).